Here is a 371-residue protein sequence, read N- to C-terminus: Sensor histidine kinase YvfT (371 aa).

At 1–10 (MKKAISIFPK) the chain is on the extracellular side. Residues 11 to 31 (EFGFFPYIFLVYTIMPFLSLL) form a helical membrane-spanning segment. Topologically, residues 32–38 (KESGVKQ) are cytoplasmic. Residues 39 to 59 (GIGYGMLLLFVAAYRQLFCSV) traverse the membrane as a helical segment. Residues 60–71 (GKASFTYWLIVQ) are Extracellular-facing. Residues 72-92 (MAVILMYSVFYNITYIYLGFF) traverse the membrane as a helical segment. Residues 93–109 (PANFVGYYKEKTNFNRA) lie on the Cytoplasmic side of the membrane. The helical transmembrane segment at 110–130 (FCALIFILLFPCLYQFIANSV) threads the bilayer. Over 131–135 (SLREL) the chain is Extracellular. A helical membrane pass occupies residues 136–156 (FSVLPFLVIMLISPFGIRSMF). Over 157–371 (RRIELEAKLA…LTIPLIKKAE (215 aa)) the chain is Cytoplasmic. The Histidine kinase domain occupies 187–368 (DLHDTLGHTL…VVALTIPLIK (182 aa)). Histidine 189 carries the post-translational modification Phosphohistidine; by autocatalysis.

It is found in the cell membrane. It catalyses the reaction ATP + protein L-histidine = ADP + protein N-phospho-L-histidine.. In terms of biological role, member of the two-component regulatory system YvfT/YvfU. Probably activates YvfU by phosphorylation. The sequence is that of Sensor histidine kinase YvfT (yvfT) from Bacillus subtilis (strain 168).